The following is a 764-amino-acid chain: 5-methyltetrahydropteroyltriglutamate--homocysteine methyltransferase (764 aa).

5-methyltetrahydropteroyltri-L-glutamate contacts are provided by residues 19–22 (RELK) and Lys113. Residues 435 to 437 (IGS) and Glu488 contribute to the L-homocysteine site. L-methionine-binding positions include 435 to 437 (IGS) and Glu488. Residues 519-520 (RC) and Trp565 each bind 5-methyltetrahydropteroyltri-L-glutamate. An L-homocysteine-binding site is contributed by Asp603. Asp603 lines the L-methionine pocket. Glu609 contributes to the 5-methyltetrahydropteroyltri-L-glutamate binding site. His645, Cys647, and Glu669 together coordinate Zn(2+). The active-site Proton donor is His698. Zn(2+) is bound at residue Cys730.

It belongs to the vitamin-B12 independent methionine synthase family. Zn(2+) serves as cofactor.

It catalyses the reaction 5-methyltetrahydropteroyltri-L-glutamate + L-homocysteine = tetrahydropteroyltri-L-glutamate + L-methionine. The protein operates within amino-acid biosynthesis; L-methionine biosynthesis via de novo pathway; L-methionine from L-homocysteine (MetE route): step 1/1. In terms of biological role, catalyzes the transfer of a methyl group from 5-methyltetrahydrofolate to homocysteine resulting in methionine formation. This is 5-methyltetrahydropteroyltriglutamate--homocysteine methyltransferase from Desulforamulus reducens (strain ATCC BAA-1160 / DSM 100696 / MI-1) (Desulfotomaculum reducens).